Here is a 55-residue protein sequence, read N- to C-terminus: uncharacterized protein (55 aa).

The disordered stretch occupies residues 1–30; that stretch reads MDKPTVETSAAPVETLVLTEPPAETQAEDS.

This is an uncharacterized protein from Frog virus 3 (isolate Goorha) (FV-3).